A 3032-amino-acid polypeptide reads, in one-letter code: DmX-like protein 2 (3032 aa).

WD repeat units follow at residues 108-145 (FLSS…ILEE), 167-207 (KTSV…KSSI), and 230-278 (AHPR…EDCL). Residue serine 326 is modified to Phosphoserine. Residues 418–486 (QLDHESDDAD…HPRPSISMPL (69 aa)) are disordered. A compositionally biased stretch (acidic residues) spans 422-434 (ESDDADREDEERS). Over residues 435-474 (QDERERGLRMKLDHELSLDRESEAGTGSSEHEDGEREGSP) the composition is skewed to basic and acidic residues. The residue at position 473 (serine 473) is a Phosphoserine. Residues 492–532 (DRKIETLLTEWNKNPDMLFTIHPVDGTFLVWHVKYLDEYNP) form a WD 4 repeat. The tract at residues 577 to 598 (PSQQEMMSVDSPHGSQLHSPSH) is disordered. Residue serine 587 is modified to Phosphoserine. Over residues 589–598 (HGSQLHSPSH) the composition is skewed to polar residues. WD repeat units follow at residues 594–633 (HSPS…KSAF), 750–802 (LHTS…RKLL), and 879–921 (QPSQ…VQAC). The tract at residues 937–958 (VPGQKNLDSSPETSSSMSSVPH) is disordered. A phosphoserine mark is found at serine 945 and serine 946. Residues 945 to 958 (SSPETSSSMSSVPH) show a composition bias toward low complexity. One copy of the WD 8 repeat lies at 1001 to 1038 (LSSSSIYPVCLAPYLVVTTCSDNKVRFWKCCMETNSLG). Residues serine 1141, serine 1144, and serine 1152 each carry the phosphoserine modification. WD repeat units follow at residues 1164–1205 (PNIK…VSDQ) and 1245–1285 (GTPS…GNVD). Phosphoserine occurs at positions 1288 and 1399. Threonine 1416 is modified (phosphothreonine). A disordered region spans residues 1443–1464 (RISEDSTKKPQSYEDHIESQSE). Residues 1444–1461 (ISEDSTKKPQSYEDHIES) are compositionally biased toward basic and acidic residues. The residue at position 1856 (serine 1856) is a Phosphoserine. Residues 1922-1953 (QLDSVSGRMENGPSESKPVSRSDGGSGADWSA) form a disordered region. Threonine 2017 is subject to Phosphothreonine. A coiled-coil region spans residues 2117–2146 (GSYERHQIERRRLQAKREHAERRKLWLQKN). Residues serine 2394 and serine 2636 each carry the phosphoserine modification. The span at 2722 to 2732 (QPGAASHSSSQ) shows a compositional bias: low complexity. Positions 2722–2744 (QPGAASHSSSQPHPPPSLPWLGS) are disordered. 6 WD repeats span residues 2757-2796 (RNLH…QLVC), 2800-2839 (AGNA…SNPK), 2846-2888 (CHSK…GNSL), 2894-2933 (CHDH…LIHT), 2936-2975 (AHDS…LIHS), and 2988-3026 (NIGA…NIPN).

Interacts with MADD and RAB3GAP. In terms of tissue distribution, expressed in the brain and pituitary gland. Detected in the hippocampus, dentate gyrus, hypothalamus, pyriform cortex and the granular and molecular layers of the cerebellum of adult animals. In the hypothalamus, expression is observed in the arcuate nucleus, the ME, the organum vasculosum of the lamina terminalis, and the subfornical organ, the subcommissural organ, and the suprachiasmatic nucleus. Both tanycytes and hypothalamic neurosecretory neurons express the protein. Expressed in the inner and outer hair cells as well as in the spiral ganglion neurons. Expressed in insulin-secreting cells of the islets of Langerhans in the pancreas.

Its subcellular location is the cytoplasmic vesicle. It localises to the secretory vesicle. It is found in the synaptic vesicle membrane. The protein localises to the neuronal dense core vesicle. Its function is as follows. May serve as a scaffold protein for MADD and RAB3GA on synaptic vesicles of neuronal and endocrine homeostatic processes. Plays a role in the brain as a key controller of neuronal and endocrine homeostatic processes. The polypeptide is DmX-like protein 2 (Dmxl2) (Mus musculus (Mouse)).